We begin with the raw amino-acid sequence, 817 residues long: Nuclear hormone receptor family member nhr-48 (817 aa).

Residues 49 to 91 form a disordered region; the sequence is YNDDKDDPFYEDEGSGGGTSGGGKKSSRKRANTTSSSGGNEKE. The segment covering 52–62 has biased composition (acidic residues); that stretch reads DKDDPFYEDEG. Residues 63 to 72 are compositionally biased toward gly residues; it reads SGGGTSGGGK. The nuclear receptor DNA-binding region spans 97–172; that stretch reads NKVCRVCGDK…VGMKKEWIMS (76 aa). NR C4-type zinc fingers lie at residues 100 to 120 and 136 to 155; these read CRVC…CESC and CPFN…CQRC. Acidic residues predominate over residues 202-212; that stretch reads ACMEDESENSY. Disordered regions lie at residues 202 to 221 and 258 to 284; these read ACME…PSHQ and MNFY…SSQL. Residues 273–284 are compositionally biased toward polar residues; the sequence is LPSNSCASSSQL.

Belongs to the nuclear hormone receptor family.

The protein localises to the nucleus. In terms of biological role, orphan nuclear receptor. The protein is Nuclear hormone receptor family member nhr-48 (nhr-48) of Caenorhabditis elegans.